Here is a 153-residue protein sequence, read N- to C-terminus: Regulatory protein RecX (153 aa).

The protein belongs to the RecX family.

It localises to the cytoplasm. Functionally, modulates RecA activity. The sequence is that of Regulatory protein RecX from Neisseria meningitidis serogroup C / serotype 2a (strain ATCC 700532 / DSM 15464 / FAM18).